We begin with the raw amino-acid sequence, 1204 residues long: Major DNA-binding protein (1204 aa).

Positions 289–314 are disordered; it reads SGTTTARGARRNDVNSTSKPSPSGGF. The segment at 497–510 is a zinc-finger region; the sequence is CSLCEKHTRPVCAH. 2 short sequence motifs (required for filament formation) span residues 841–842 and 1146–1148; these read FW and FNF. The interval 1177-1204 is required for nuclear localization; sequence LKRPPEDDELFDLSGIPIKHGNITMEMI.

It belongs to the herpesviridae major DNA-binding protein family. In terms of assembly, homooligomers. Forms double-helical filaments necessary for the formation of replication compartments within the host nucleus. Interacts with the origin-binding protein. Interacts with the helicase primase complex; this interaction stimulates primer synthesis activity of the helicase-primase complex. Interacts with the DNA polymerase. Interacts with the alkaline exonuclease; this interaction increases its nuclease processivity.

The protein resides in the host nucleus. Plays several crucial roles in viral infection. Participates in the opening of the viral DNA origin to initiate replication by interacting with the origin-binding protein. May disrupt loops, hairpins and other secondary structures present on ssDNA to reduce and eliminate pausing of viral DNA polymerase at specific sites during elongation. Promotes viral DNA recombination by performing strand-transfer, characterized by the ability to transfer a DNA strand from a linear duplex to a complementary single-stranded DNA circle. Can also catalyze the renaturation of complementary single strands. Additionally, reorganizes the host cell nucleus, leading to the formation of prereplicative sites and replication compartments. This process is driven by the protein which can form double-helical filaments in the absence of DNA. This is Major DNA-binding protein from Homo sapiens (Human).